The chain runs to 328 residues: Src kinase-associated phosphoprotein 2 (328 aa).

The PH domain maps to 103–206 (EYLRAGYLEK…WVNIIMNSRG (104 aa)). A disordered region spans residues 231 to 262 (IYEELPEESEKPVTEIETPKATPVPVNNTSGK). Over residues 238–248 (ESEKPVTEIET) the composition is skewed to basic and acidic residues. Residues 266–327 (DYANFYRGLW…PKAYIMEMYD (62 aa)) form the SH3 domain.

The protein belongs to the SKAP family. Phosphorylated on tyrosines.

The protein localises to the cytoplasm. In terms of biological role, may be involved in B-cell and macrophage adhesion processes. May play a role in src signaling pathway. This is Src kinase-associated phosphoprotein 2 (skap2) from Xenopus tropicalis (Western clawed frog).